The following is a 122-amino-acid chain: Large ribosomal subunit protein uL14 (122 aa).

Belongs to the universal ribosomal protein uL14 family. Part of the 50S ribosomal subunit. Forms a cluster with proteins L3 and L19. In the 70S ribosome, L14 and L19 interact and together make contacts with the 16S rRNA in bridges B5 and B8.

Functionally, binds to 23S rRNA. Forms part of two intersubunit bridges in the 70S ribosome. This Sphingopyxis alaskensis (strain DSM 13593 / LMG 18877 / RB2256) (Sphingomonas alaskensis) protein is Large ribosomal subunit protein uL14.